Reading from the N-terminus, the 124-residue chain is Glucagon-1 (124 aa).

Residues Met1–Met25 form the signal peptide. Positions Ala28–Ser54 are disordered. Over residues Ser38 to Ser54 the composition is skewed to basic and acidic residues. Residues Ser84 to Glu88 constitute a propeptide that is removed on maturation.

This sequence belongs to the glucagon family.

It localises to the secreted. In terms of biological role, glucagon plays a key role in glucose metabolism and homeostasis. Regulates blood glucose by increasing gluconeogenesis and decreasing glycolysis. This chain is Glucagon-1 (gcg1), found in Lophius americanus (American angler).